The sequence spans 393 residues: Beta-1,3-galactosyltransferase 7 (393 aa).

Residues 9–29 (VISLKWVPFLCISFFALGAIF) form a helical; Signal-anchor for type II membrane protein membrane-spanning segment. The interval 89–112 (SLDKSVSTLSSTRSSQEMVDGSET) is disordered. Low complexity predominate over residues 93–103 (SVSTLSSTRSS).

It belongs to the glycosyltransferase 31 family. It depends on Mn(2+) as a cofactor. As to expression, expressed in leaves, stems, flowers and siliques.

It localises to the golgi apparatus membrane. It participates in protein modification; protein glycosylation. Its function is as follows. Beta-1,3-galactosyltransferase that transfers galactose from UDP-galactose to substrates with a terminal glycosyl residue. This chain is Beta-1,3-galactosyltransferase 7 (B3GALT7), found in Arabidopsis thaliana (Mouse-ear cress).